A 611-amino-acid chain; its full sequence is Threonine--tRNA ligase (611 aa).

Residues 209–502 (DHRRLGKDLE…MTENYAGDFP (294 aa)) form a catalytic region. 3 residues coordinate Zn(2+): cysteine 302, histidine 353, and histidine 479.

This sequence belongs to the class-II aminoacyl-tRNA synthetase family. As to quaternary structure, homodimer. Zn(2+) serves as cofactor.

The protein localises to the cytoplasm. It catalyses the reaction tRNA(Thr) + L-threonine + ATP = L-threonyl-tRNA(Thr) + AMP + diphosphate + H(+). Its function is as follows. Catalyzes the attachment of threonine to tRNA(Thr) in a two-step reaction: L-threonine is first activated by ATP to form Thr-AMP and then transferred to the acceptor end of tRNA(Thr). Also edits incorrectly charged L-seryl-tRNA(Thr). This chain is Threonine--tRNA ligase, found in Synechococcus sp. (strain CC9902).